A 1046-amino-acid chain; its full sequence is uncharacterized protein (1046 aa).

A compositionally biased stretch (low complexity) spans 594 to 615 (LNSIPSDSSSSGSSRKSSPRGS). Residues 594–622 (LNSIPSDSSSSGSSRKSSPRGSPNLGEAP) form a disordered region.

This is an uncharacterized protein from Invertebrate iridescent virus 6 (IIV-6).